The sequence spans 418 residues: MAGRLPACVVDCGTGYTKLGYAGNTEPQFIIPSCIAIKESAKVGDQAQRRVMKGVDDLDFFIGDEAIEKPTYATKWPIRHGIVEDWDLMERFMEQVIFKYLRAEPEDHYFLLTEPPLNTPENREYTAEIMFESFNVPGLYIAVQAVLALAASWTSRQVGERTLTGTVIDSGDGVTHVIPVAEGYVIGSCIKHIPIAGRDITYFIQQLLRDREVGIPPEQSLETAKAVKERYSYVCPDLVKEFNKYDTDGSKWIKQYTGINAISKKEFSIDVGYERFLGPEIFFHPEFANPDFTQPISEVVDEVIQNCPIDVRRPLYKNIVLSGGSTMFRDFGRRLQRDLKRTVDARLKLSEELSGGRLKPKPIDVQVITHHMQRYAVWFGGSMLASTPEFYQVCHTKKDYEEIGPSICRHNPVFGVMS.

Position 2 is an N-acetylalanine (Ala2). Residues Lys240, Lys244, Lys251, and Lys254 each carry the N6-acetyllysine modification.

This sequence belongs to the actin family. ARP3 subfamily. In terms of assembly, component of the Arp2/3 complex composed of ACTR2/ARP2, ACTR3/ARP3, ARPC1B/p41-ARC, ARPC2/p34-ARC, ARPC3/p21-ARC, ARPC4/p20-ARC and ARPC5/p16-ARC. Interacts with WHDC1. Interacts weakly with MEFV. Interacts with AVIL.

Its subcellular location is the cytoplasm. The protein localises to the cytoskeleton. It is found in the cell projection. It localises to the nucleus. ATP-binding component of the Arp2/3 complex, a multiprotein complex that mediates actin polymerization upon stimulation by nucleation-promoting factor (NPF). The Arp2/3 complex mediates the formation of branched actin networks in the cytoplasm, providing the force for cell motility. Seems to contact the pointed end of the daughter actin filament. In podocytes, required for the formation of lamellipodia downstream of AVIL and PLCE1 regulation. In addition to its role in the cytoplasmic cytoskeleton, the Arp2/3 complex also promotes actin polymerization in the nucleus, thereby regulating gene transcription and repair of damaged DNA. The Arp2/3 complex promotes homologous recombination (HR) repair in response to DNA damage by promoting nuclear actin polymerization, leading to drive motility of double-strand breaks (DSBs). Plays a role in ciliogenesis. This chain is Actin-related protein 3 (ACTR3), found in Bos taurus (Bovine).